We begin with the raw amino-acid sequence, 224 residues long: V-type proton ATPase subunit S1-like protein (224 aa).

The helical transmembrane segment at 147 to 167 threads the bilayer; it reads PAFLIGLAMSLILLLVLAYAL.

The protein belongs to the vacuolar ATPase subunit S1 family.

It localises to the membrane. The sequence is that of V-type proton ATPase subunit S1-like protein (ATP6AP1L) from Homo sapiens (Human).